The primary structure comprises 345 residues: Anthranilate phosphoribosyltransferase (345 aa).

5-phospho-alpha-D-ribose 1-diphosphate contacts are provided by residues G84, 87 to 88 (GD), T92, 94 to 97 (NIST), 112 to 120 (KHGNRSVSS), and S124. Anthranilate is bound at residue G84. S96 provides a ligand contact to Mg(2+). N115 is a binding site for anthranilate. R170 serves as a coordination point for anthranilate. Mg(2+)-binding residues include D229 and E230.

Belongs to the anthranilate phosphoribosyltransferase family. As to quaternary structure, homodimer. Mg(2+) is required as a cofactor.

It catalyses the reaction N-(5-phospho-beta-D-ribosyl)anthranilate + diphosphate = 5-phospho-alpha-D-ribose 1-diphosphate + anthranilate. It participates in amino-acid biosynthesis; L-tryptophan biosynthesis; L-tryptophan from chorismate: step 2/5. In terms of biological role, catalyzes the transfer of the phosphoribosyl group of 5-phosphorylribose-1-pyrophosphate (PRPP) to anthranilate to yield N-(5'-phosphoribosyl)-anthranilate (PRA). This Xanthomonas euvesicatoria pv. vesicatoria (strain 85-10) (Xanthomonas campestris pv. vesicatoria) protein is Anthranilate phosphoribosyltransferase.